A 440-amino-acid chain; its full sequence is Proline--tRNA ligase (440 aa).

Belongs to the class-II aminoacyl-tRNA synthetase family. ProS type 2 subfamily. As to quaternary structure, homodimer.

The protein resides in the cytoplasm. The enzyme catalyses tRNA(Pro) + L-proline + ATP = L-prolyl-tRNA(Pro) + AMP + diphosphate. Functionally, catalyzes the attachment of proline to tRNA(Pro) in a two-step reaction: proline is first activated by ATP to form Pro-AMP and then transferred to the acceptor end of tRNA(Pro). The sequence is that of Proline--tRNA ligase from Xanthobacter autotrophicus (strain ATCC BAA-1158 / Py2).